Consider the following 169-residue polypeptide: Myosin regulatory light chain 11 (169 aa).

Residue alanine 2 is modified to N,N,N-trimethylalanine. Residues serine 15 and serine 16 each carry the phosphoserine modification. A phosphothreonine mark is found at threonine 25 and threonine 35. Residues 25-60 (TQIQEFKEAFTVIDQNRDGIIDKEDLRDTFAAMGRL) enclose the EF-hand 1 domain. Ca(2+) contacts are provided by aspartate 38, asparagine 40, aspartate 42, and aspartate 49. Serine 75 carries the phosphoserine modification. 2 consecutive EF-hand domains span residues 95–130 (DPED…QCDR) and 131–166 (FSQE…GDAK). A Phosphothreonine modification is found at threonine 101.

Myosin is a hexamer of 2 heavy chains and 4 light chains. In terms of tissue distribution, expressed in fetal and adult skeletal muscle.

In terms of biological role, myosin regulatory subunit that plays an essential role to maintain muscle integrity during early development. Plays a role in muscle contraction. The sequence is that of Myosin regulatory light chain 11 from Homo sapiens (Human).